We begin with the raw amino-acid sequence, 468 residues long: Argininosuccinate lyase (468 aa).

This sequence belongs to the lyase 1 family. Argininosuccinate lyase subfamily.

It localises to the cytoplasm. The enzyme catalyses 2-(N(omega)-L-arginino)succinate = fumarate + L-arginine. Its pathway is amino-acid biosynthesis; L-arginine biosynthesis; L-arginine from L-ornithine and carbamoyl phosphate: step 3/3. The protein is Argininosuccinate lyase of Cutibacterium acnes (strain DSM 16379 / KPA171202) (Propionibacterium acnes).